The primary structure comprises 228 residues: Expansin-B13 (228 aa).

The first 22 residues, 1-22, serve as a signal peptide directing secretion; the sequence is MASSSLLLASVVVAAMVSAVSC. Residue Asn-32 is glycosylated (N-linked (GlcNAc...) asparagine). Residues 61-172 enclose the Expansin-like EG45 domain; sequence SGACGYKDVD…KEKGSEEWKA (112 aa). 2 disulfides stabilise this stretch: Cys-64–Cys-92 and Cys-100–Cys-106. Residues 142-223 enclose the Expansin-like CBD domain; that stretch reads GKDEELLKYV…GWKADSVYKS (82 aa).

The protein belongs to the expansin family. Expansin B subfamily.

It localises to the secreted. The protein resides in the cell wall. The protein localises to the membrane. Functionally, may cause loosening and extension of plant cell walls by disrupting non-covalent bonding between cellulose microfibrils and matrix glucans. No enzymatic activity has been found. May be required for rapid internodal elongation in deepwater rice during submergence. The protein is Expansin-B13 (EXPB13) of Oryza sativa subsp. japonica (Rice).